Consider the following 262-residue polypeptide: MRVTPRTLQNYKKTARPIVTLTAWDYAIARLVDQAGVDVILVGDSLAMVALGYENTLPVTLEAMIHHTQAVCRGVKNALVVSDLPFLTYQESLSQAIHTAGRILKETTAQAIKLEGGHPAMAETVERLTRLGVPVMGHVGLTPQSVHTLGYRQQGNTELEATRVIQEAIALEQAGAFAVVLEHIPATLAQTITEKLTIPTIGIGAGRHCDGQVLVTADLLGLSEKAPPFAKQYLDLDNLITNAVQRYSDDVRTQQFPPHLGS.

Residues Asp-44 and Asp-83 each contribute to the Mg(2+) site. 3-methyl-2-oxobutanoate-binding positions include 44 to 45 (DS), Asp-83, and Lys-113. Residue Glu-115 participates in Mg(2+) binding. Glu-182 serves as the catalytic Proton acceptor.

Belongs to the PanB family. As to quaternary structure, homodecamer; pentamer of dimers. The cofactor is Mg(2+).

It is found in the cytoplasm. The catalysed reaction is 3-methyl-2-oxobutanoate + (6R)-5,10-methylene-5,6,7,8-tetrahydrofolate + H2O = 2-dehydropantoate + (6S)-5,6,7,8-tetrahydrofolate. Its pathway is cofactor biosynthesis; (R)-pantothenate biosynthesis; (R)-pantoate from 3-methyl-2-oxobutanoate: step 1/2. In terms of biological role, catalyzes the reversible reaction in which hydroxymethyl group from 5,10-methylenetetrahydrofolate is transferred onto alpha-ketoisovalerate to form ketopantoate. The sequence is that of 3-methyl-2-oxobutanoate hydroxymethyltransferase from Picosynechococcus sp. (strain ATCC 27264 / PCC 7002 / PR-6) (Agmenellum quadruplicatum).